A 230-amino-acid polypeptide reads, in one-letter code: Acyl-protein thioesterase 1 (230 aa).

Residues S119, D174, and H208 each act as charge relay system in the active site. Residue K224 is modified to N6-acetyllysine.

It belongs to the AB hydrolase superfamily. AB hydrolase 2 family. Homodimer.

The protein localises to the cytoplasm. Its subcellular location is the cell membrane. The protein resides in the nucleus membrane. It is found in the endoplasmic reticulum. It carries out the reaction S-hexadecanoyl-L-cysteinyl-[protein] + H2O = L-cysteinyl-[protein] + hexadecanoate + H(+). The enzyme catalyses 1-hexadecanoyl-sn-glycero-3-phosphocholine + H2O = sn-glycerol 3-phosphocholine + hexadecanoate + H(+). It catalyses the reaction a 1-(9Z-octadecenoyl)-2-acyl-sn-glycero-3-phosphocholine + H2O = a 2-acyl-sn-glycero-3-phosphocholine + (9Z)-octadecenoate + H(+). Functionally, acts as an acyl-protein thioesterase. Hydrolyzes fatty acids from S-acylated cysteine residues in proteins such as trimeric G alpha proteins or HRAS. Acts as a palmitoyl thioesterase that catalyzes depalmitoylation of proteins, such as ADRB2, KCNMA1 and SQSTM1. Acts as a negative regulator of autophagy by mediating palmitoylation of SQSTM1, decreasing affinity between SQSTM1 and ATG8 proteins and recruitment of ubiquitinated cargo proteins to autophagosomes. Acts as a lysophospholipase and hydrolyzes lysophosphatidylcholine (lyso-PC). Also hydrolyzes lysophosphatidylethanolamine (lyso-PE), lysophosphatidylinositol (lyso-PI) and lysophosphatidylserine (lyso-PS). Has much higher thioesterase activity than lysophospholipase activity. Contributes to the production of lysophosphatidic acid (LPA) during blood coagulation by recognizing and cleaving plasma phospholipids to generate lysophospholipids which in turn act as substrates for ENPP2 to produce LPA. The chain is Acyl-protein thioesterase 1 (Lypla1) from Mus musculus (Mouse).